Reading from the N-terminus, the 209-residue chain is Transcription factor 23 (209 aa).

Disordered regions lie at residues Met1–Lys20 and Leu54–Arg85. The span at Gly72–Arg85 shows a compositional bias: basic and acidic residues. Residues Glu75–Leu127 enclose the bHLH domain.

In terms of assembly, forms inactive heterodimeric complex with TCF3. In terms of tissue distribution, highly expressed in the uterus (predominantly in myometrium), ovary, and testis. Expression in the uterus is higher in the diestrus phase than in the estrus phase and reaches a maximum at 7.5 dpc. Expression declines towards the time of delivery and returns to the non-pregnant level 4 days after delivery. Low expression seen in lung, heart, intestine, and spleen.

It is found in the nucleus. In terms of biological role, inhibits E-box-mediated binding and transactivation of bHLH factors. Inhibitory effect is similar to that of ID proteins. Inhibits the formation of TCF3 and MYOD1 homodimers and heterodimers. Lacks DNA binding activity. May be involved in the regulation or modulation of smooth muscle contraction of the uterus during pregnancy and particularly around the time of delivery. Seems to play a role in the inhibition of myogenesis. This is Transcription factor 23 (Tcf23) from Mus musculus (Mouse).